The chain runs to 174 residues: Co-chaperone protein HscB homolog (174 aa).

A J domain is found at 2 to 74 (NYFNLFNFTP…LRRAEHLLSL (73 aa)).

This sequence belongs to the HscB family. In terms of assembly, interacts with HscA and stimulates its ATPase activity.

In terms of biological role, co-chaperone involved in the maturation of iron-sulfur cluster-containing proteins. Seems to help targeting proteins to be folded toward HscA. The polypeptide is Co-chaperone protein HscB homolog (Shewanella denitrificans (strain OS217 / ATCC BAA-1090 / DSM 15013)).